A 179-amino-acid chain; its full sequence is Transcriptional regulator ICP22 homolog (179 aa).

Residues 1 to 12 show a composition bias toward basic and acidic residues; that stretch reads MSRDRDRARPDT. The segment at 1-40 is disordered; that stretch reads MSRDRDRARPDTRLSSSDNESDDEDYQLPHSHPEYGSDSS.

This sequence belongs to the herpesviridae ICP22 family.

This Gallid herpesvirus 2 (strain Chicken/Md5/ATCC VR-987) (GaHV-2) protein is Transcriptional regulator ICP22 homolog (MDV088).